Reading from the N-terminus, the 263-residue chain is Imidazole glycerol phosphate synthase subunit HisF (263 aa).

Active-site residues include Asp-11 and Asp-130.

This sequence belongs to the HisA/HisF family. As to quaternary structure, heterodimer of HisH and HisF.

It localises to the cytoplasm. It catalyses the reaction 5-[(5-phospho-1-deoxy-D-ribulos-1-ylimino)methylamino]-1-(5-phospho-beta-D-ribosyl)imidazole-4-carboxamide + L-glutamine = D-erythro-1-(imidazol-4-yl)glycerol 3-phosphate + 5-amino-1-(5-phospho-beta-D-ribosyl)imidazole-4-carboxamide + L-glutamate + H(+). The protein operates within amino-acid biosynthesis; L-histidine biosynthesis; L-histidine from 5-phospho-alpha-D-ribose 1-diphosphate: step 5/9. IGPS catalyzes the conversion of PRFAR and glutamine to IGP, AICAR and glutamate. The HisF subunit catalyzes the cyclization activity that produces IGP and AICAR from PRFAR using the ammonia provided by the HisH subunit. This chain is Imidazole glycerol phosphate synthase subunit HisF, found in Herpetosiphon aurantiacus (strain ATCC 23779 / DSM 785 / 114-95).